Here is a 2009-residue protein sequence, read N- to C-terminus: Sodium channel protein type 1 subunit alpha (2009 aa).

Topologically, residues 1–128 are cytoplasmic; it reads MEQTVLVPPG…KIAIKILVHS (128 aa). Over residues 28–48 the composition is skewed to basic and acidic residues; it reads RIAEEKAKNPKPDKKDDDENG. A disordered region spans residues 28–60; sequence RIAEEKAKNPKPDKKDDDENGPKPNSDLEAGKN. An I repeat occupies 110–454; the sequence is ILTPFNPLRK…QQMLEQLKKQ (345 aa). Residues 129 to 146 form a helical membrane-spanning segment; sequence LFSMLIMCTILTNCVFMT. Residues 147 to 152 are Extracellular-facing; it reads MSNPPD. Residues 153-177 traverse the membrane as a helical segment; it reads WTKNVEYTFTGIYTFESLIKIIARG. Residues 178 to 188 lie on the Cytoplasmic side of the membrane; sequence FCLEDFTFLRD. A helical membrane pass occupies residues 189–205; sequence PWNWLDFTVITFAYVTE. Residues 206–213 are Extracellular-facing; that stretch reads FVDLGNVS. N-linked (GlcNAc...) asparagine glycosylation is present at Asn-211. Residues 214–235 form a helical membrane-spanning segment; sequence ALRTFRVLRALKTISVIPGLKT. At 236-245 the chain is on the cytoplasmic side; the sequence is IVGALIQSVK. The helical transmembrane segment at 246–269 threads the bilayer; the sequence is KLSDVMILTVFCLSVFALIGLQLF. At 270 to 369 the chain is on the extracellular side; sequence MGNLRNKCVQ…YGYTSFDTFS (100 aa). Disulfide bonds link Cys-277–Cys-345 and Cys-336–Cys-351. N-linked (GlcNAc...) asparagine glycans are attached at residues Asn-284, Asn-295, Asn-301, Asn-306, and Asn-338. The pore-forming intramembrane region spans 370–384; the sequence is WAFLSLFRLMTQDFW. At 385 to 397 the chain is on the extracellular side; the sequence is ENLYQLTLRAAGK. The helical transmembrane segment at 398–423 threads the bilayer; that stretch reads TYMIFFVLVIFLGSFYLINLILAVVA. At 424-768 the chain is on the cytoplasmic side; sequence MAYEEQNQAT…HIVNLVVMDP (345 aa). A disordered region spans residues 458-528; it reads AQQAAAATAS…EFHKSESEDS (71 aa). Ser-470 carries the post-translational modification Phosphoserine. The span at 479 to 492 shows a compositional bias: low complexity; it reads LSDSSSEASKLSSK. The span at 495–506 shows a compositional bias: basic residues; it reads KERRNRRKKRKQ. Residues 507-528 are compositionally biased toward basic and acidic residues; sequence KEQSGGEEKDDDEFHKSESEDS. A phosphoserine mark is found at Ser-523, Ser-525, Ser-550, Ser-551, Ser-607, and Ser-730. A disordered region spans residues 584–628; that stretch reads VGSENDFADDEHSTFEDNESRRDSLFVPRRHGERRNSNLSQTSRS. Residues 593 to 607 are compositionally biased toward basic and acidic residues; that stretch reads DEHSTFEDNESRRDS. The stretch at 750 to 1022 is one II repeat; that stretch reads CSPYWLKVKH…QIAVDRMHKG (273 aa). Residues 769 to 787 traverse the membrane as a helical segment; the sequence is FVDLAITICIVLNTLFMAM. The Extracellular segment spans residues 788–797; sequence EHYPMTEHFN. A helical transmembrane segment spans residues 798–820; the sequence is HVLTVGNLVFTGIFTAEMFLKII. Residues 821–830 are Cytoplasmic-facing; it reads AMDPYYYFQE. Residues 831 to 849 form a helical membrane-spanning segment; that stretch reads GWNIFDGFIVTLSLVELGL. Residues 850–854 lie on the Extracellular side of the membrane; sequence ANVEG. A helical transmembrane segment spans residues 855 to 874; the sequence is LSVLRSFRLLRVFKLAKSWP. Over 875-891 the chain is Cytoplasmic; it reads TLNMLIKIIGNSVGALG. A helical transmembrane segment spans residues 892-912; that stretch reads NLTLVLAIIVFIFAVVGMQLF. The Extracellular portion of the chain corresponds to 913–938; the sequence is GKSYKDCVCKIATDCKLPRWHMNDFF. Cys-921 and Cys-927 are oxidised to a cystine. An intramembrane region (pore-forming) is located at residues 939 to 952; it reads HSFLIVFRVLCGEW. The Extracellular segment spans residues 953-965; it reads IETMWDCMEVAGQ. Residues Cys-959 and Cys-968 are joined by a disulfide bond. The chain crosses the membrane as a helical span at residues 966-992; that stretch reads AMCLTVFMMVMVIRNLVVLNLFLALLL. Residues 993-1218 are Cytoplasmic-facing; that stretch reads SSFSADNLAA…RTCFRIVEHN (226 aa). Positions 1129-1163 are disordered; that stretch reads TEDFSSESDLEESKEKLNESSSSSEGSTVDIGAPA. Residues 1200–1514 form an III repeat; the sequence is RGKQWWNLRR…KKYYNAMKKL (315 aa). Residues 1219–1237 traverse the membrane as a helical segment; it reads WFETFIVFMILLSSGALAF. At 1238-1250 the chain is on the extracellular side; sequence EDIYIDQRKTIKT. A helical membrane pass occupies residues 1251-1276; that stretch reads MLEYADKVFTYIFILEMLLKWVAYGY. Residues 1277–1278 lie on the Cytoplasmic side of the membrane; the sequence is QT. A helical membrane pass occupies residues 1279-1304; that stretch reads YFTNAWCWLDFLIVDVSLVSLTANAL. Topologically, residues 1305-1313 are extracellular; sequence GYSELGAIK. Residues 1314–1332 traverse the membrane as a helical segment; that stretch reads SLRTLRALRPLRALSRFEG. The Cytoplasmic segment spans residues 1333 to 1345; the sequence is MRVVVNALLGAIP. A helical transmembrane segment spans residues 1346–1369; that stretch reads SIMNVLLVCLIFWLIFSIMGVNLF. Residues 1370–1415 lie on the Extracellular side of the membrane; sequence AGKFYHCVNTTTGDTFEITEVNNHSDCLKLIERNETARWKNVKVNF. Cys-1376 and Cys-1396 are disulfide-bonded. Asn-1378, Asn-1392, and Asn-1403 each carry an N-linked (GlcNAc...) asparagine glycan. An intramembrane region (pore-forming) is located at residues 1416 to 1433; sequence DNVGFGYLSLLQVATFKG. Residues 1434-1457 are Extracellular-facing; the sequence is WMDIMYAAVDSRNVELQPKYEESL. The helical transmembrane segment at 1458-1483 threads the bilayer; that stretch reads YMYLYFVIFIIFGSFFTLNLFIGVII. The Cytoplasmic segment spans residues 1484–1541; the sequence is DNFNQQKKKFGGQDIFMTEEQKKYYNAMKKLGSKKPQKPIPRPGNKFQGMVFDFVTRQ. Residue Ser-1516 is modified to Phosphoserine; by PKC. One copy of the IV repeat lies at 1523–1821; sequence IPRPGNKFQG…WEKFDPDATQ (299 aa). The chain crosses the membrane as a helical span at residues 1542–1560; it reads VFDISIMILICLNMVTMMV. Residues 1561 to 1571 lie on the Extracellular side of the membrane; the sequence is ETDDQSDYVTS. The tract at residues 1561–1571 is S1-S2 loop of repeat IV; the sequence is ETDDQSDYVTS. A helical membrane pass occupies residues 1572–1593; the sequence is ILSRINLVFIVLFTGECVLKLI. Topologically, residues 1594-1601 are cytoplasmic; the sequence is SLRHYYFT. A helical transmembrane segment spans residues 1602–1623; it reads IGWNIFDFVVVILSIVGMFLAE. Residues 1619-1636 form an S3b-S4 loop of repeat IV region; sequence MFLAELIEKYFVSPTLFR. Over 1624 to 1636 the chain is Extracellular; that stretch reads LIEKYFVSPTLFR. Residues 1637–1655 form a helical membrane-spanning segment; it reads VIRLARIGRILRLIKGAKG. Over 1656 to 1665 the chain is Cytoplasmic; the sequence is IRTLLFALMM. A helical membrane pass occupies residues 1666-1688; it reads SLPALFNIGLLLFLVMFIYAIFG. Residues 1689 to 1711 are Extracellular-facing; that stretch reads MSNFAYVKREVGIDDMFNFETFG. Residues 1712 to 1726 constitute an intramembrane region (pore-forming); that stretch reads NSMICLFQITTSAGW. At 1727–1759 the chain is on the extracellular side; the sequence is DGLLAPILNSKPPDCDPNKVNPGSSVKGDCGNP. Cys-1741 and Cys-1756 are disulfide-bonded. The chain crosses the membrane as a helical span at residues 1760–1788; the sequence is SVGIFFFVSYIIISFLVVVNMYIAVILEN. Topologically, residues 1789–2009 are cytoplasmic; it reads FSVATEESAE…EGKDEKAKGK (221 aa). The IQ domain maps to 1915 to 1944; the sequence is EEVSAVIIQRAYRRHLLKRTVKQASFTYNK. The tract at residues 1986–2009 is disordered; sequence YDRVTKPIVEKHEQEGKDEKAKGK. Basic and acidic residues predominate over residues 1988-2009; sequence RVTKPIVEKHEQEGKDEKAKGK.

It belongs to the sodium channel (TC 1.A.1.10) family. Nav1.1/SCN1A subfamily. As to quaternary structure, the Nav1.1 voltage-gated sodium channel consists of an ion-conducting alpha subunit SCN1A which is functional on its own regulated by one or more beta-1 (SCN1B), beta-2 (SCN2B), beta-3 (SCN3B) and beta-4 (SCN4B) subunits. SCN1B and SCN3B are non-covalently associated with SCN1A. SCN2B and SCN4B are disulfide-linked to SCN1A. SCN1B regulates both the expression at the plasma membrane and the voltage dependence of Nav1.1 inactivation. SCN3B and SCN4B reduce Nav1.1 conductance. Probably interacts with TMEM233; modulates the gating properties of NaV1.1. Interacts with FGF13; regulates the steady-state inactivation of Nav.1.1. Phosphorylation at Ser-1516 by PKC in a highly conserved cytoplasmic loop slows inactivation of the sodium channel and reduces peak sodium currents.

Its subcellular location is the cell membrane. It catalyses the reaction Na(+)(in) = Na(+)(out). Activated by the spider toxins Hm1a and Hm1b (H.maculata, AC P60992 and AC P0DOC5) eliciting acute pain and mechanical allodynia. Inhibited by the conotoxin GVIIJ. In terms of biological role, pore-forming subunit of Nav1.1, a voltage-gated sodium (Nav) channel that directly mediates the depolarizing phase of action potentials in excitable membranes. Navs, also called VGSCs (voltage-gated sodium channels) or VDSCs (voltage-dependent sodium channels), operate by switching between closed and open conformations depending on the voltage difference across the membrane. In the open conformation they allow Na(+) ions to selectively pass through the pore, along their electrochemical gradient. The influx of Na(+) ions provokes membrane depolarization, initiating the propagation of electrical signals throughout cells and tissues. By regulating the excitability of neurons, ensures that they respond appropriately to synaptic inputs, maintaining the balance between excitation and inhibition in brain neural circuits. Nav1.1 plays a role in controlling the excitability and action potential propagation from somatosensory neurons, thereby contributing to the sensory perception of mechanically-induced pain. This is Sodium channel protein type 1 subunit alpha from Rattus norvegicus (Rat).